Here is a 411-residue protein sequence, read N- to C-terminus: Ferrochelatase, mitochondrial (411 aa).

The N-terminal 41 residues, 1–41 (MAAFRAAHRLLGHILRNESSAGLVTQRWSSSAAVASVPKSS), are a transit peptide targeting the mitochondrion. The interval 34 to 55 (VASVPKSSDPKPHAQPDKRKPK) is disordered. Positions 41–51 (SDPKPHAQPDK) are enriched in basic and acidic residues. Positions 102, 110, and 117 each coordinate protoporphyrin IX. Residue C183 coordinates [2Fe-2S] cluster. Catalysis depends on residues H217 and D370. Residues C390, C393, and C398 each coordinate [2Fe-2S] cluster.

It belongs to the ferrochelatase family. Homodimer. Homotetramer. [2Fe-2S] cluster serves as cofactor.

It is found in the mitochondrion inner membrane. The catalysed reaction is heme b + 2 H(+) = protoporphyrin IX + Fe(2+). It functions in the pathway porphyrin-containing compound metabolism; protoheme biosynthesis; protoheme from protoporphyrin-IX: step 1/1. In terms of biological role, catalyzes the ferrous insertion into protoporphyrin IX. The sequence is that of Ferrochelatase, mitochondrial from Xenopus laevis (African clawed frog).